Reading from the N-terminus, the 493-residue chain is Protein kinase PINOID 2 (493 aa).

Residues 1–53 form a disordered region; it reads MAAIKEESDYDSSRSSLTAPDSRRSWISDIGSSSSVSARSFGGDTPASSCRYK. Low complexity predominate over residues 27–44; the sequence is ISDIGSSSSVSARSFGGD. In terms of domain architecture, Protein kinase spans 80–443; sequence FRLVRRLGSG…SAEVKRHPFF (364 aa). ATP contacts are provided by residues 86 to 94 and Lys120; that span reads LGSGDLGNV. Asp216 functions as the Proton acceptor in the catalytic mechanism. Positions 295–306 are enriched in gly residues; that stretch reads GGGAAAGNNGDG. Disordered stretches follow at residues 295-320 and 458-493; these read GGGA…TAEP and EVPA…FDYF. Residues 307 to 319 show a composition bias toward acidic residues; sequence DGNDEEAETETAE. The AGC-kinase C-terminal domain maps to 444 to 493; sequence KGVNWALVRSVRPPEVPAPPAPAPKKVMTMSKKERQEPYNYRPENHFDYF. The segment covering 474 to 493 has biased composition (basic and acidic residues); it reads SKKERQEPYNYRPENHFDYF.

This sequence belongs to the protein kinase superfamily. Ser/Thr protein kinase family.

The enzyme catalyses L-seryl-[protein] + ATP = O-phospho-L-seryl-[protein] + ADP + H(+). It carries out the reaction L-threonyl-[protein] + ATP = O-phospho-L-threonyl-[protein] + ADP + H(+). In terms of biological role, serine/threonine-protein kinase involved in the regulation of auxin signaling. The sequence is that of Protein kinase PINOID 2 (PID2) from Oryza sativa subsp. japonica (Rice).